A 459-amino-acid chain; its full sequence is Bifunctional protein GlmU (459 aa).

The segment at 1–229 is pyrophosphorylase; sequence MTNYAIILAA…FDESLGVNDR (229 aa). UDP-N-acetyl-alpha-D-glucosamine contacts are provided by residues 8-11, K22, Q72, and 77-78; these read LAAG and GT. Residue D102 coordinates Mg(2+). UDP-N-acetyl-alpha-D-glucosamine-binding residues include G139, E154, N169, and N227. N227 serves as a coordination point for Mg(2+). The segment at 230 to 250 is linker; sequence VALAKAEKVMRRRINHAHMVN. The segment at 251 to 459 is N-acetyltransferase; sequence GVTLTNPAST…KKKPHHPNNK (209 aa). Residues R332 and K350 each coordinate UDP-N-acetyl-alpha-D-glucosamine. Residue H362 is the Proton acceptor of the active site. Residues Y365 and N376 each contribute to the UDP-N-acetyl-alpha-D-glucosamine site. Acetyl-CoA contacts are provided by residues A379, 385-386, S404, A422, and R439; that span reads NY.

It in the N-terminal section; belongs to the N-acetylglucosamine-1-phosphate uridyltransferase family. The protein in the C-terminal section; belongs to the transferase hexapeptide repeat family. In terms of assembly, homotrimer. Mg(2+) serves as cofactor.

Its subcellular location is the cytoplasm. The catalysed reaction is alpha-D-glucosamine 1-phosphate + acetyl-CoA = N-acetyl-alpha-D-glucosamine 1-phosphate + CoA + H(+). The enzyme catalyses N-acetyl-alpha-D-glucosamine 1-phosphate + UTP + H(+) = UDP-N-acetyl-alpha-D-glucosamine + diphosphate. It functions in the pathway nucleotide-sugar biosynthesis; UDP-N-acetyl-alpha-D-glucosamine biosynthesis; N-acetyl-alpha-D-glucosamine 1-phosphate from alpha-D-glucosamine 6-phosphate (route II): step 2/2. It participates in nucleotide-sugar biosynthesis; UDP-N-acetyl-alpha-D-glucosamine biosynthesis; UDP-N-acetyl-alpha-D-glucosamine from N-acetyl-alpha-D-glucosamine 1-phosphate: step 1/1. The protein operates within bacterial outer membrane biogenesis; LPS lipid A biosynthesis. Catalyzes the last two sequential reactions in the de novo biosynthetic pathway for UDP-N-acetylglucosamine (UDP-GlcNAc). The C-terminal domain catalyzes the transfer of acetyl group from acetyl coenzyme A to glucosamine-1-phosphate (GlcN-1-P) to produce N-acetylglucosamine-1-phosphate (GlcNAc-1-P), which is converted into UDP-GlcNAc by the transfer of uridine 5-monophosphate (from uridine 5-triphosphate), a reaction catalyzed by the N-terminal domain. In Streptococcus mutans serotype c (strain ATCC 700610 / UA159), this protein is Bifunctional protein GlmU.